A 300-amino-acid chain; its full sequence is ESX-5 secretion-associated protein EspG5 (300 aa).

The protein belongs to the EspG family. Interacts specifically with ESX-5-dependent PE/PPE proteins. Forms a 1:1:1 heterotrimeric complex with the PE25/PPE41 dimer, via PPE41. Binding of EspG5 does not cause conformational changes in the PE25/PPE41 dimer. Forms a 1:1:1 heterotrimeric complex with the PE8/PPE15 dimer, via PPE15.

It localises to the cytoplasm. Specific chaperone for cognate PE/PPE proteins. Plays an important role in preventing aggregation of PE/PPE dimers. In Mycobacterium tuberculosis (strain ATCC 25618 / H37Rv), this protein is ESX-5 secretion-associated protein EspG5.